Here is a 574-residue protein sequence, read N- to C-terminus: Calcium-dependent protein kinase 9 (574 aa).

The tract at residues 1–64 (MGNTCCVAPA…RARAKPNPYD (64 aa)) is disordered. Residue glycine 2 is the site of N-myristoyl glycine attachment. A compositionally biased stretch (low complexity) spans 28–40 (KSPAPSATTTTAT). The Protein kinase domain maps to 101-359 (YQLGRELGRG…AQQVLDHPWL (259 aa)). Residues 107–115 (LGRGEFGVT) and lysine 130 contribute to the ATP site. Aspartate 225 (proton acceptor) is an active-site residue. An autoinhibitory domain region spans residues 365 to 395 (APNVPLGDVVRARLKQFSLMNRLKKKAMRVI). EF-hand domains are found at residues 402 to 437 (EEVE…VGSK), 438 to 473 (LAEP…LQRL), 474 to 509 (SNDN…DSGH), and 510 to 545 (ADDA…GTDW). Ca(2+)-binding residues include aspartate 415, aspartate 417, asparagine 419, arginine 421, glutamate 426, aspartate 451, aspartate 453, asparagine 455, tyrosine 457, glutamate 462, aspartate 487, aspartate 489, serine 491, tyrosine 493, glutamate 498, aspartate 523, aspartate 525, aspartate 527, arginine 529, and glutamate 534.

The protein belongs to the protein kinase superfamily. Ser/Thr protein kinase family. CDPK subfamily. As to expression, expressed in leaf blades and stems. Expressed at low levels in anthers and spikelets.

Its subcellular location is the membrane. It carries out the reaction L-seryl-[protein] + ATP = O-phospho-L-seryl-[protein] + ADP + H(+). It catalyses the reaction L-threonyl-[protein] + ATP = O-phospho-L-threonyl-[protein] + ADP + H(+). Activated by calcium. Autophosphorylation may play an important role in the regulation of the kinase activity. Functionally, may play a role in signal transduction pathways that involve calcium as a second messenger. Functions in signal transduction pathways that positively regulate responses to drought, osmotic, and dehydration stress. Regulates expression of stress-associated genes in response to drought. Involved in tolerance to drought stress by increasing proline and soluble sugars, and improving stomatal closure. Required for pollen maturation and spikelet fertility. The protein is Calcium-dependent protein kinase 9 of Oryza sativa subsp. japonica (Rice).